A 527-amino-acid polypeptide reads, in one-letter code: Catalase (527 aa).

A compositionally biased stretch (basic and acidic residues) spans 1–22 (MADSRDPASDQMKQWKEQRAPQ). The tract at residues 1–34 (MADSRDPASDQMKQWKEQRAPQKPDVLTTGGGNP) is disordered. A2 bears the N-acetylalanine mark. S9 is subject to Phosphoserine. An N6-succinyllysine modification is found at K13. Catalysis depends on residues H75 and N148. Positions 194, 201, 203, and 213 each coordinate NADP(+). K221 is subject to N6-succinyllysine. At K233 the chain carries N6-acetyllysine. 4 residues coordinate NADP(+): K237, W303, H305, and K306. N6-acetyllysine; alternate is present on K306. An N6-succinyllysine; alternate modification is found at K306. Y358 lines the heme pocket. S417 and S434 each carry phosphoserine. Residues K449 and K480 each carry the N6-acetyllysine; alternate modification. An N6-succinyllysine; alternate mark is found at K449 and K480. A Phosphothreonine modification is found at T511. Phosphoserine is present on S517. At K522 the chain carries N6-succinyllysine. The Microbody targeting signal; atypical motif lies at 524-527 (KANL).

It belongs to the catalase family. In terms of assembly, homotetramer. Interacts (via microbody targeting signal) with PEX5, monomeric form interacts with PEX5, leading to its translocation into peroxisomes. It depends on heme as a cofactor. Requires NADP(+) as cofactor. In terms of tissue distribution, expressed in renal proximal tubules (at protein level).

Its subcellular location is the peroxisome matrix. The enzyme catalyses 2 H2O2 = O2 + 2 H2O. Catalyzes the degradation of hydrogen peroxide (H(2)O(2)) generated by peroxisomal oxidases to water and oxygen, thereby protecting cells from the toxic effects of hydrogen peroxide. Promotes growth of cells including T-cells, B-cells, myeloid leukemia cells, melanoma cells, mastocytoma cells and normal and transformed fibroblast cells. This chain is Catalase (Cat), found in Rattus norvegicus (Rat).